Consider the following 253-residue polypeptide: 2-succinyl-6-hydroxy-2,4-cyclohexadiene-1-carboxylate synthase (253 aa).

The 137-residue stretch at 11–147 (PWLVCLHGLF…PEALQDWYQQ (137 aa)) folds into the AB hydrolase-1 domain.

Belongs to the AB hydrolase superfamily. MenH family. In terms of assembly, monomer.

The catalysed reaction is 5-enolpyruvoyl-6-hydroxy-2-succinyl-cyclohex-3-ene-1-carboxylate = (1R,6R)-6-hydroxy-2-succinyl-cyclohexa-2,4-diene-1-carboxylate + pyruvate. It functions in the pathway quinol/quinone metabolism; 1,4-dihydroxy-2-naphthoate biosynthesis; 1,4-dihydroxy-2-naphthoate from chorismate: step 3/7. Its pathway is quinol/quinone metabolism; menaquinone biosynthesis. In terms of biological role, catalyzes a proton abstraction reaction that results in 2,5-elimination of pyruvate from 2-succinyl-5-enolpyruvyl-6-hydroxy-3-cyclohexene-1-carboxylate (SEPHCHC) and the formation of 2-succinyl-6-hydroxy-2,4-cyclohexadiene-1-carboxylate (SHCHC). The polypeptide is 2-succinyl-6-hydroxy-2,4-cyclohexadiene-1-carboxylate synthase (Pectobacterium atrosepticum (strain SCRI 1043 / ATCC BAA-672) (Erwinia carotovora subsp. atroseptica)).